A 408-amino-acid chain; its full sequence is UDP-N-acetylglucosamine--dolichyl-phosphate N-acetylglucosaminephosphotransferase (408 aa).

Residues 1–10 (MWAFPELPLP) are Lumenal-facing. A helical membrane pass occupies residues 11–38 (LLVNLFGSLLGFVATVTLIPAFRSHFIA). Topologically, residues 39–58 (ARLCGQDLNKLSRQQIPESQ) are cytoplasmic. UDP-N-acetyl-alpha-D-glucosamine contacts are provided by residues 44 to 46 (QDL) and glutamate 56. A helical transmembrane segment spans residues 59–78 (GVICGAVFLIILFCFIPFPF). At 79-91 (LNCFVEEQCKAFP) the chain is on the lumenal side. The chain crosses the membrane as a helical span at residues 92–118 (HHEFVALIGALLAICCMIFLGFADDVL). The Cytoplasmic segment spans residues 119–121 (NLP). The chain crosses the membrane as a helical span at residues 122–143 (WRHKLLLPTAASLPLLMVYFTN). Lysine 125 is a dolichyl phosphate binding site. The Lumenal portion of the chain corresponds to 144-166 (FGNTTIVVPKPFRWILGLHLDLG). Residue asparagine 146 is glycosylated (N-linked (GlcNAc...) asparagine). Residues 167–186 (ILYYVYMGLLAVFCTNAINI) form a helical membrane-spanning segment. 178–186 (VFCTNAINI) is a binding site for dolichyl phosphate. Asparagine 185 is a binding site for Mg(2+). Residues 187 to 192 (LAGING) are Cytoplasmic-facing. Residue asparagine 191 participates in UDP-N-acetyl-alpha-D-glucosamine binding. A helical membrane pass occupies residues 193-213 (LEAGQSLVISASIIVFNLVEL). Over 214 to 218 (EGDYR) the chain is Lumenal. A helical transmembrane segment spans residues 219–242 (DDHVFSLYFMIPFFFTTLGLLYHN). The Cytoplasmic portion of the chain corresponds to 243 to 250 (WYPSQVFV). Residues 251–269 (GDTFCYFAGMTFAVVGILG) form a helical membrane-spanning segment. A Mg(2+)-binding site is contributed by aspartate 252. Residues 270 to 271 (HF) are Lumenal-facing. A helical transmembrane segment spans residues 272 to 293 (SKTMLLFFIPQVFNFLYSLPQL). Residues 294–375 (LHAIPCPRHR…LLLKIFGPIH (82 aa)) are Cytoplasmic-facing. UDP-N-acetyl-alpha-D-glucosamine is bound at residue 301–303 (RHR). A helical transmembrane segment spans residues 376–400 (ERNLTLLLLLLQILSSAVTFSIRYQ). The Lumenal portion of the chain corresponds to 401–408 (LVRLFYDV).

It belongs to the glycosyltransferase 4 family. In terms of assembly, homodimer. It depends on Mg(2+) as a cofactor.

The protein localises to the endoplasmic reticulum membrane. It carries out the reaction a di-trans,poly-cis-dolichyl phosphate + UDP-N-acetyl-alpha-D-glucosamine = an N-acetyl-alpha-D-glucosaminyl-diphospho-di-trans,poly-cis-dolichol + UMP. The protein operates within protein modification; protein glycosylation. With respect to regulation, inhibited by natural nucleoside antibiotic tunicamycin, which acts as a structural analog and competitor of UDP-GlcNAc. In terms of biological role, UDP-N-acetylglucosamine--dolichyl-phosphate N-acetylglucosaminephosphotransferase that operates in the biosynthetic pathway of dolichol-linked oligosaccharides, the glycan precursors employed in protein asparagine (N)-glycosylation. The assembly of dolichol-linked oligosaccharides begins on the cytosolic side of the endoplasmic reticulum membrane and finishes in its lumen. The sequential addition of sugars to dolichol pyrophosphate produces dolichol-linked oligosaccharides containing fourteen sugars, including two GlcNAcs, nine mannoses and three glucoses. Once assembled, the oligosaccharide is transferred from the lipid to nascent proteins by oligosaccharyltransferases. Catalyzes the initial step of dolichol-linked oligosaccharide biosynthesis, transfering GlcNAc-1-P from cytosolic UDP-GlcNAc onto the carrier lipid dolichyl phosphate (P-dolichol), yielding GlcNAc-P-P-dolichol embedded in the cytoplasmic leaflet of the endoplasmic reticulum membrane. In Cricetulus longicaudatus (Long-tailed dwarf hamster), this protein is UDP-N-acetylglucosamine--dolichyl-phosphate N-acetylglucosaminephosphotransferase (DPAGT1).